A 275-amino-acid polypeptide reads, in one-letter code: U6 snRNA phosphodiesterase 1 (275 aa).

The disordered stretch occupies residues 1-25 (MEFLKHYEDDEDQDDENNTKDENVN). H122 (proton acceptor) is an active-site residue. AMP contacts are provided by residues 122-124 (HIS), Y206, and 208-214 (NPEPHLS). UMP contacts are provided by residues Y206 and 210–214 (EPHLS). H212 serves as the catalytic Proton donor.

This sequence belongs to the 2H phosphoesterase superfamily. USB1 family.

It is found in the nucleus. It carries out the reaction a 3'-end uridylyl-uridine-RNA = a 3'-end 2',3'-cyclophospho-uridine-RNA + uridine. 3'-5' RNA exonuclease that trims the 3' end of oligo(U) tracts of the pre-U6 small nuclear RNA (snRNA) molecule, leading to the formation of a mature U6 snRNA 3' end-terminated with a 2',3'-cyclic phosphate. Participates in the U6 snRNA 3' end processing that prevents U6 snRNA degradation. The polypeptide is U6 snRNA phosphodiesterase 1 (Dictyostelium discoideum (Social amoeba)).